Reading from the N-terminus, the 464-residue chain is UDP-glycosyltransferase 83A1 (464 aa).

UDP-alpha-D-glucose-binding positions include Ser-295, 341-343 (APQ), 358-366 (HCGWNSTLE), and 380-383 (FADQ).

This sequence belongs to the UDP-glycosyltransferase family.

The polypeptide is UDP-glycosyltransferase 83A1 (UGT83A1) (Arabidopsis thaliana (Mouse-ear cress)).